Reading from the N-terminus, the 319-residue chain is tRNA uridine(34) hydroxylase (319 aa).

The Rhodanese domain occupies Leu-124–Glu-218. The active-site Cysteine persulfide intermediate is the Cys-178.

This sequence belongs to the TrhO family.

It carries out the reaction uridine(34) in tRNA + AH2 + O2 = 5-hydroxyuridine(34) in tRNA + A + H2O. In terms of biological role, catalyzes oxygen-dependent 5-hydroxyuridine (ho5U) modification at position 34 in tRNAs. The polypeptide is tRNA uridine(34) hydroxylase (Listeria monocytogenes serotype 4a (strain HCC23)).